A 236-amino-acid chain; its full sequence is DNA repair protein RecO (236 aa).

It belongs to the RecO family.

Its function is as follows. Involved in DNA repair and RecF pathway recombination. The sequence is that of DNA repair protein RecO from Haemophilus influenzae (strain 86-028NP).